The primary structure comprises 341 residues: tRNA N6-adenosine threonylcarbamoyltransferase (341 aa).

Positions 111 and 115 each coordinate Fe cation. Residues Leu-134–Gly-138, Asp-167, Gly-180, and Asn-276 each bind substrate. Position 304 (Asp-304) interacts with Fe cation.

It belongs to the KAE1 / TsaD family. Requires Fe(2+) as cofactor.

It is found in the cytoplasm. The catalysed reaction is L-threonylcarbamoyladenylate + adenosine(37) in tRNA = N(6)-L-threonylcarbamoyladenosine(37) in tRNA + AMP + H(+). Functionally, required for the formation of a threonylcarbamoyl group on adenosine at position 37 (t(6)A37) in tRNAs that read codons beginning with adenine. Is involved in the transfer of the threonylcarbamoyl moiety of threonylcarbamoyl-AMP (TC-AMP) to the N6 group of A37, together with TsaE and TsaB. TsaD likely plays a direct catalytic role in this reaction. The sequence is that of tRNA N6-adenosine threonylcarbamoyltransferase from Ectopseudomonas mendocina (strain ymp) (Pseudomonas mendocina).